Here is a 224-residue protein sequence, read N- to C-terminus: Artemin (224 aa).

Positions 1–39 (MELGLGEPTALSHCLRPRWQPALWPTLAALALLSSVTEA) are cleaved as a signal peptide. Positions 40–111 (SLDPMSRSPA…AALRGARAAR (72 aa)) are excised as a propeptide. The tract at residues 41-124 (LDPMSRSPAS…RSSRARATDA (84 aa)) is disordered. The span at 80–95 (RPPPQSPQPAPPPPGP) shows a compositional bias: pro residues. The segment covering 96–116 (ALQSPPAALRGARAARAGTRS) has biased composition (low complexity). Intrachain disulfides connect cysteine 127-cysteine 192, cysteine 154-cysteine 220, and cysteine 158-cysteine 222. A glycan (N-linked (GlcNAc...) asparagine) is linked at asparagine 206.

Belongs to the TGF-beta family. GDNF subfamily. As to quaternary structure, homodimer; disulfide-linked. Interacts with GFRA3 coreceptor and RET: forms a 2:2:2 ternary complex composed of ARTN ligand, GFRA3 and RET receptor. Cochlea. Expressed at higher level in sesorineural epithelium than in the modiolus region or substantia nigra.

It localises to the secreted. Functionally, growth factor that supports the survival of sensory and sympathetic peripheral neurons in culture and also supports the survival of dopaminergic neurons of the ventral mid-brain. Acts by binding to its coreceptor, GFRA3, leading to autophosphorylation and activation of the RET receptor. Strong attractant of gut hematopoietic cells thus promoting the formation Peyer's patch-like structures, a major component of the gut-associated lymphoid tissue. In Rattus norvegicus (Rat), this protein is Artemin (Artn).